A 269-amino-acid chain; its full sequence is Ribosomal RNA small subunit methyltransferase J (269 aa).

Residues Glu-125 to Arg-126 and Asp-179 each bind S-adenosyl-L-methionine.

The protein belongs to the methyltransferase superfamily. RsmJ family.

It localises to the cytoplasm. The catalysed reaction is guanosine(1516) in 16S rRNA + S-adenosyl-L-methionine = N(2)-methylguanosine(1516) in 16S rRNA + S-adenosyl-L-homocysteine + H(+). Functionally, specifically methylates the guanosine in position 1516 of 16S rRNA. This is Ribosomal RNA small subunit methyltransferase J from Pseudomonas savastanoi pv. phaseolicola (strain 1448A / Race 6) (Pseudomonas syringae pv. phaseolicola (strain 1448A / Race 6)).